The following is a 416-amino-acid chain: Phosphoribosylamine--glycine ligase (416 aa).

In terms of domain architecture, ATP-grasp spans 107-303 (KDVMACAGVP…LAGLLMAAAT (197 aa)). An ATP-binding site is contributed by 133-184 (LAAFGAPYVVKDDGLAAGKGVVVTDDVEAARAHANACDRVVVEEFLDGPEVS). Residues E273 and N275 each coordinate Mg(2+).

This sequence belongs to the GARS family. Mg(2+) is required as a cofactor. Requires Mn(2+) as cofactor.

It carries out the reaction 5-phospho-beta-D-ribosylamine + glycine + ATP = N(1)-(5-phospho-beta-D-ribosyl)glycinamide + ADP + phosphate + H(+). The protein operates within purine metabolism; IMP biosynthesis via de novo pathway; N(1)-(5-phospho-D-ribosyl)glycinamide from 5-phospho-alpha-D-ribose 1-diphosphate: step 2/2. In Streptomyces coelicolor (strain ATCC BAA-471 / A3(2) / M145), this protein is Phosphoribosylamine--glycine ligase.